A 427-amino-acid chain; its full sequence is GTPase ERA-like, chloroplastic (427 aa).

A chloroplast-targeting transit peptide spans 1-39; it reads MAVSPHISPTLSRYKFFSTSVVENPNFSPYRIYSRRRVT. An Era-type G domain is found at 128–298; that stretch reads RSGYVAVVGM…KEWILSKLPF (171 aa). Residues 136 to 143 form a G1 region; that stretch reads GMPNVGKS. Residue 136-143 participates in GTP binding; it reads GMPNVGKS. Positions 162-166 are G2; that stretch reads QTTRH. Positions 183-186 are G3; sequence DTPG. GTP contacts are provided by residues 183-187 and 248-251; these read DTPGV and NKKD. The G4 stretch occupies residues 248 to 251; it reads NKKD. The segment at 277 to 279 is G5; the sequence is VSA. Residues 329-406 enclose the KH type-2 domain; that stretch reads YRNEVPYACQ…FLEVEVKVKE (78 aa).

The protein belongs to the TRAFAC class TrmE-Era-EngA-EngB-Septin-like GTPase superfamily. Era GTPase family.

It is found in the plastid. It localises to the chloroplast stroma. Its subcellular location is the chloroplast nucleoid. Its function is as follows. Nuclear genome-encoded probable GTPase involved in ribosome biogenesis in chloroplasts. Plays a role in 16S rRNA maturation in plastids and may contribute to the assembly of the small (30S) ribosomal subunit. In Arabidopsis thaliana (Mouse-ear cress), this protein is GTPase ERA-like, chloroplastic.